The sequence spans 105 residues: POU domain, class 3, transcription factor 3 (105 aa).

Residues 1–49 form the POU-specific domain; sequence QADVGLALGTLYGNVFSQTTICRFEALQLSFKNMCKLKPLLNKWLEEAD. Positions 67 to 105 form a DNA-binding region, homeobox; that stretch reads KRKKRTSIEVSVKGALESHFLKCPKPAAQEITTLADSLQ.

The protein belongs to the POU transcription factor family. Class-3 subfamily.

The protein localises to the nucleus. The sequence is that of POU domain, class 3, transcription factor 3 (pou3f3) from Xenopus laevis (African clawed frog).